The following is a 379-amino-acid chain: Flap endonuclease 1 (379 aa).

The tract at residues 1-105 (MGIKGLTKLL…QELAKRYSKR (105 aa)) is N-domain. Asp-34 is a Mg(2+) binding site. Residue Arg-71 participates in DNA binding. 5 residues coordinate Mg(2+): Asp-87, Glu-159, Glu-161, Asp-180, and Asp-182. The segment at 123–254 (AIEKLSKRTV…QTALKLIRQH (132 aa)) is I-domain. A DNA-binding site is contributed by Glu-159. The DNA site is built by Gly-232 and Asp-234. Residue Asp-234 participates in Mg(2+) binding. A disordered region spans residues 331–379 (AKNKSSQGRLESFFKPTATTSAPLKRKETSDKTSKAAANKKTKAGGKKK). The interval 336–344 (SQGRLESFF) is interaction with PCNA. Over residues 355-364 (KRKETSDKTS) the composition is skewed to basic and acidic residues. Positions 368–379 (ANKKTKAGGKKK) are enriched in basic residues.

It belongs to the XPG/RAD2 endonuclease family. FEN1 subfamily. As to quaternary structure, interacts with PCNA. Three molecules of FEN1 bind to one PCNA trimer with each molecule binding to one PCNA monomer. PCNA stimulates the nuclease activity without altering cleavage specificity. Mg(2+) serves as cofactor. Post-translationally, phosphorylated. Phosphorylation upon DNA damage induces relocalization to the nuclear plasma.

The protein resides in the nucleus. It is found in the nucleolus. The protein localises to the nucleoplasm. It localises to the mitochondrion. In terms of biological role, structure-specific nuclease with 5'-flap endonuclease and 5'-3' exonuclease activities involved in DNA replication and repair. During DNA replication, cleaves the 5'-overhanging flap structure that is generated by displacement synthesis when DNA polymerase encounters the 5'-end of a downstream Okazaki fragment. It enters the flap from the 5'-end and then tracks to cleave the flap base, leaving a nick for ligation. Also involved in the long patch base excision repair (LP-BER) pathway, by cleaving within the apurinic/apyrimidinic (AP) site-terminated flap. Acts as a genome stabilization factor that prevents flaps from equilibrating into structures that lead to duplications and deletions. Also possesses 5'-3' exonuclease activity on nicked or gapped double-stranded DNA, and exhibits RNase H activity. Also involved in replication and repair of rDNA and in repairing mitochondrial DNA. This Zea mays (Maize) protein is Flap endonuclease 1.